The chain runs to 77 residues: Acyl carrier protein (77 aa).

In terms of domain architecture, Carrier spans 1 to 76 (MSLEDDVKAI…DVIKYIQEHQ (76 aa)). At Ser-36 the chain carries O-(pantetheine 4'-phosphoryl)serine.

Belongs to the acyl carrier protein (ACP) family. Post-translationally, 4'-phosphopantetheine is transferred from CoA to a specific serine of apo-ACP by AcpS. This modification is essential for activity because fatty acids are bound in thioester linkage to the sulfhydryl of the prosthetic group.

Its subcellular location is the cytoplasm. It functions in the pathway lipid metabolism; fatty acid biosynthesis. Carrier of the growing fatty acid chain in fatty acid biosynthesis. The protein is Acyl carrier protein of Chlamydia trachomatis serovar L2 (strain ATCC VR-902B / DSM 19102 / 434/Bu).